Consider the following 485-residue polypeptide: MSVPLLKIGVVLSTMAMITNWMSQTLPSLVGLNTTKLTAASGGTLDRSTGVLPTNPEESWQVYSSAQDSEGRCICTVVAPQQTMCSRDARTKQLRQLLEKVQNMSQSIEVLDRRTQRDLQYVEKMENQMRGLESKFKQVEESHKQHLARQFKAIKAKMEELRPLIPVLEEYKADAKLVLQFKEEVQNLTSVLNELQEEIGAYDYEELQNRVSNLEERLRACMQKLACGKLTGISDPITIKTSGSRFGSWMTDPLAPEGENKVWYMDSYHNNRFVREYKSMADFMNTDNFTSHRLPHPWSGTGQVVYNGSIYFNKYQSHIIIRFDLKTETILKTRSLDYAGYNNMYHYAWGGHSDIDLMVDENGLWAVYATNQNAGNIVISKLDPNTLQSLQTWNTSYPKRSAGEAFIICGTLYVTNGYSGGTKVHYAYQTNASTYEYIDIPFQNKYSHISMLDYNPKDRALYAWNNGHQILYNVTLFHVIRSDEL.

Positions 1 to 16 are cleaved as a signal peptide; that stretch reads MSVPLLKIGVVLSTMA. N-linked (GlcNAc...) asparagine glycosylation is found at Asn33, Asn103, Asn187, Asn288, Asn307, Asn394, Asn431, and Asn473. The stretch at 87-225 forms a coiled coil; sequence RDARTKQLRQ…ERLRACMQKL (139 aa). Residues 226–478 form the Olfactomedin-like domain; the sequence is ACGKLTGISD…QILYNVTLFH (253 aa). Cys227 and Cys409 are oxidised to a cystine.

Homotetramer; disulfide-linked. Dimer of dimers, giving rise to a V-shaped homotretramer. Component of the AMPAR complex. In terms of processing, glycosylated.

It is found in the secreted. The protein resides in the synapse. It localises to the endoplasmic reticulum. Its subcellular location is the cell projection. The protein localises to the axon. It is found in the perikaryon. Contributes to the regulation of axonal growth. May play an important role in regulating the production of neural crest cells by the neural tube. The chain is Noelin (OLFM1) from Gallus gallus (Chicken).